A 432-amino-acid chain; its full sequence is Serine--tRNA ligase (432 aa).

Residue 239–241 (TSE) participates in L-serine binding. Residue 270-272 (RSE) coordinates ATP. Glutamate 293 lines the L-serine pocket. 357–360 (EISS) is an ATP binding site. Residue serine 392 participates in L-serine binding.

It belongs to the class-II aminoacyl-tRNA synthetase family. Type-1 seryl-tRNA synthetase subfamily. In terms of assembly, homodimer. The tRNA molecule binds across the dimer.

The protein resides in the cytoplasm. The enzyme catalyses tRNA(Ser) + L-serine + ATP = L-seryl-tRNA(Ser) + AMP + diphosphate + H(+). It carries out the reaction tRNA(Sec) + L-serine + ATP = L-seryl-tRNA(Sec) + AMP + diphosphate + H(+). Its pathway is aminoacyl-tRNA biosynthesis; selenocysteinyl-tRNA(Sec) biosynthesis; L-seryl-tRNA(Sec) from L-serine and tRNA(Sec): step 1/1. Catalyzes the attachment of serine to tRNA(Ser). Is also able to aminoacylate tRNA(Sec) with serine, to form the misacylated tRNA L-seryl-tRNA(Sec), which will be further converted into selenocysteinyl-tRNA(Sec). The sequence is that of Serine--tRNA ligase from Methylibium petroleiphilum (strain ATCC BAA-1232 / LMG 22953 / PM1).